Consider the following 527-residue polypeptide: Peptide chain release factor 3 (527 aa).

Residues 10–278 (DRRRTFAIIS…TFVENAPAPL (269 aa)) form the tr-type G domain. GTP contacts are provided by residues 19 to 26 (SHPDAGKT), 87 to 91 (DTPGH), and 141 to 144 (NKLD).

This sequence belongs to the TRAFAC class translation factor GTPase superfamily. Classic translation factor GTPase family. PrfC subfamily.

It is found in the cytoplasm. Increases the formation of ribosomal termination complexes and stimulates activities of RF-1 and RF-2. It binds guanine nucleotides and has strong preference for UGA stop codons. It may interact directly with the ribosome. The stimulation of RF-1 and RF-2 is significantly reduced by GTP and GDP, but not by GMP. The chain is Peptide chain release factor 3 from Geobacter metallireducens (strain ATCC 53774 / DSM 7210 / GS-15).